The chain runs to 484 residues: 6-phosphogluconate dehydrogenase, decarboxylating (484 aa).

Residues 10 to 15 (GLAVMG), 33 to 35 (NRT), 75 to 77 (IKA), and asparagine 103 each bind NADP(+). Residues asparagine 103 and 129 to 131 (SGG) each bind substrate. Lysine 183 serves as the catalytic Proton acceptor. 186–187 (HN) lines the substrate pocket. The active-site Proton donor is the glutamate 190. Substrate-binding residues include tyrosine 191, lysine 260, arginine 287, arginine 448, and histidine 454.

It belongs to the 6-phosphogluconate dehydrogenase family. In terms of assembly, homodimer.

The catalysed reaction is 6-phospho-D-gluconate + NADP(+) = D-ribulose 5-phosphate + CO2 + NADPH. The protein operates within carbohydrate degradation; pentose phosphate pathway; D-ribulose 5-phosphate from D-glucose 6-phosphate (oxidative stage): step 3/3. In terms of biological role, catalyzes the oxidative decarboxylation of 6-phosphogluconate to ribulose 5-phosphate and CO(2), with concomitant reduction of NADP to NADPH. This is 6-phosphogluconate dehydrogenase, decarboxylating from Caenorhabditis elegans.